The chain runs to 184 residues: Oligoribonuclease (184 aa).

One can recognise an Exonuclease domain in the interval 7-170; sequence LIWIDLEMTG…DDIRESVAEL (164 aa). The active site involves Tyr-128.

The protein belongs to the oligoribonuclease family.

Its subcellular location is the cytoplasm. In terms of biological role, 3'-to-5' exoribonuclease specific for small oligoribonucleotides. The polypeptide is Oligoribonuclease (Baumannia cicadellinicola subsp. Homalodisca coagulata).